Consider the following 343-residue polypeptide: MQMRDAIGAVMRHRHLSFDDTHAVMRAIMTGEASDAQIGGFLIGLAMKGETAEEITAAAQVMRELMTPVEVDRSHLVDIVGTGGDGANLFNVSTASSFVVAAAGGRVAKHGNRSVSSSSGSADLFDVAGISLELPPVEVARCITEIGVGFMFAPMHHQAMRHAIGPRREMGVRTVFNILGPLTNPAGAPNQLLGVYDPALLTIMAEALRRLGSEHVLVVNAEDGLDEISLAAPTRVAELRDGEIHEYTIAPEDFGIERQALAPLKVVTAEDSLKLVKAALVGEGPAADIVALNAGAALYAAGVADTLSEGVVLAQDSQASKLPLEKMKELADFTRILAHKDER.

5-phospho-alpha-D-ribose 1-diphosphate is bound by residues G81, 84-85 (GD), 91-94 (NVST), 109-117 (KHGNRSVSS), and S121. G81 is a binding site for anthranilate. S93 contacts Mg(2+). N112 lines the anthranilate pocket. R167 serves as a coordination point for anthranilate. Mg(2+) is bound by residues D226 and E227.

The protein belongs to the anthranilate phosphoribosyltransferase family. In terms of assembly, homodimer. The cofactor is Mg(2+).

The catalysed reaction is N-(5-phospho-beta-D-ribosyl)anthranilate + diphosphate = 5-phospho-alpha-D-ribose 1-diphosphate + anthranilate. It participates in amino-acid biosynthesis; L-tryptophan biosynthesis; L-tryptophan from chorismate: step 2/5. Functionally, catalyzes the transfer of the phosphoribosyl group of 5-phosphorylribose-1-pyrophosphate (PRPP) to anthranilate to yield N-(5'-phosphoribosyl)-anthranilate (PRA). In Chromohalobacter salexigens (strain ATCC BAA-138 / DSM 3043 / CIP 106854 / NCIMB 13768 / 1H11), this protein is Anthranilate phosphoribosyltransferase.